Here is a 478-residue protein sequence, read N- to C-terminus: Lysosome membrane protein 2 (478 aa).

The Cytoplasmic portion of the chain corresponds to 1–4 (MGRC). The chain crosses the membrane as a helical span at residues 5-27 (CFYTAGTLSLLLLVTSVTLLVAR). The Lumenal portion of the chain corresponds to 28-433 (VFQKAVDQSI…RLKSMINTTL (406 aa)). Asn-45, Asn-68, and Asn-105 each carry an N-linked (GlcNAc...) asparagine glycan. The tract at residues 155–191 (IIEAMLKAYQQKLFVTHTVDELLWGYKDEILSLIHVF) is important for interaction with GBA1. 4 N-linked (GlcNAc...) asparagine glycosylation sites follow: Asn-206, Asn-224, Asn-249, and Asn-304. 2 disulfide bridges follow: Cys-274–Cys-329 and Cys-312–Cys-318. 3 N-linked (GlcNAc...) asparagine glycosylation sites follow: Asn-325, Asn-412, and Asn-430. The chain crosses the membrane as a helical span at residues 434-459 (IITNIPYIIMALGVFFGLVFTWLACK). Over 460 to 478 (GQGSMDEGTADERAPLIRT) the chain is Cytoplasmic.

Belongs to the CD36 family. In terms of assembly, interacts with GBA1. As to quaternary structure, (Microbial infection) Interacts with enterovirus 71 capsid proteins VP1 and VP2.

The protein resides in the lysosome membrane. Its function is as follows. Acts as a lysosomal receptor for glucosylceramidase (GBA1) targeting. In terms of biological role, (Microbial infection) Acts as a receptor for enterovirus 71. This is Lysosome membrane protein 2 (SCARB2) from Homo sapiens (Human).